A 693-amino-acid polypeptide reads, in one-letter code: Triadin (693 aa).

Residues 1–47 are Cytoplasmic-facing; the sequence is MTEITAEGNASTTTTVIDNKNGCIPKSPGKVLKRSVTEDIVTTFSSP. A helical membrane pass occupies residues 48 to 68; it reads AAWLLVIALIITWSAVAIVMF. Topologically, residues 69-693 are lumenal; it reads DLVDYKNFSA…NSPGQKQQEQ (625 aa). Residues 117-130 are compositionally biased toward acidic residues; sequence EGDEDDEDADEDID. Disordered regions lie at residues 117–260, 278–649, and 666–693; these read EGDE…AVHE, GDLK…QTRP, and FQFP…QQEQ. 2 stretches are compositionally biased toward basic and acidic residues: residues 131 to 241 and 249 to 260; these read KGEI…KETP and KKDDKEMPAVHE. Phosphoserine is present on S301. A compositionally biased stretch (basic and acidic residues) spans 305-352; sequence LEEKEKEEKKKMEKKDTSDTKKKEKEVKKKSEETTIDGKGKEPGKPPE. Residues 354 to 364 are compositionally biased toward polar residues; that stretch reads KQMTAKLTTQA. 2 stretches are compositionally biased toward basic and acidic residues: residues 366–427 and 438–502; these read ARKD…KEEI and GKKE…KEAK. The N-linked (GlcNAc...) asparagine glycan is linked to N515. Basic and acidic residues-rich tracts occupy residues 526-547 and 558-579; these read VKPE…DKPK and DSGK…REEN. The N-linked (GlcNAc...) asparagine glycan is linked to N584. The segment covering 587–637 has biased composition (basic and acidic residues); that stretch reads KAEKPGKIPKDSKEAPASKKDKEDSKEAPTSKKDKEDSKDVPHSKKDKEVT. A compositionally biased stretch (polar residues) spans 672 to 693; sequence PVQQPGENPGKTNSPGQKQQEQ.

As to quaternary structure, homooligomer of variable subunit number; disulfide-linked. Interacts with CASQ1 and RYR1 in skeletal muscle. Interacts with CASQ2. In terms of processing, phosphorylated by CaMK2. N-glycosylated. In terms of tissue distribution, detected in heart (at protein level). Detected in heart.

It localises to the sarcoplasmic reticulum membrane. Contributes to the regulation of lumenal Ca2+ release via the sarcoplasmic reticulum calcium release channels RYR1 and RYR2, a key step in triggering skeletal and heart muscle contraction. Required for normal organization of the triad junction, where T-tubules and the sarcoplasmic reticulum terminal cisternae are in close contact. Required for normal skeletal muscle strength. Plays a role in excitation-contraction coupling in the heart and in regulating the rate of heart beats. In Mus musculus (Mouse), this protein is Triadin.